Reading from the N-terminus, the 97-residue chain is YcgL domain-containing protein PMI1171 (97 aa).

A YcgL domain is found at 3–87; sequence MICAIYRSTK…PVESMLNAYL (85 aa).

This chain is YcgL domain-containing protein PMI1171, found in Proteus mirabilis (strain HI4320).